A 233-amino-acid chain; its full sequence is Protease inhibitor Egf1.0 (233 aa).

The signal sequence occupies residues Met-1–Ala-28. Residues Cys-52–Cys-104 form the TIL domain. Positions Phe-201–Asp-233 are disordered.

It belongs to the polydnaviridae EGF-like motif protein family. As to quaternary structure, interacts with host PAP1 and PAP3.

Its function is as follows. Counteracts the host humoral immune response by inhibiting the processing and the amidolytic activity of host PAP3. Thereby, melanization of host hemolymph, normally producing several reactive intermediates toxic for viruses, is deregulated and proper immune response cannot occur. The chain is Protease inhibitor Egf1.0 (O12) from Microplitis demolitor (Parasitoid wasp).